Reading from the N-terminus, the 543-residue chain is Keratin, type II cytoskeletal 75 (543 aa).

A compositionally biased stretch (polar residues) spans 1 to 16 (MSRQSTITFQTSSRRG). Residues 1-48 (MSRQSTITFQTSSRRGFSTASATTPATSRSRFSSASVTHSPAGSGGLG) form a disordered region. Residues 1–144 (MSRQSTITFQ…DPNIQRVRKE (144 aa)) form a head region. Residues 17–36 (FSTASATTPATSRSRFSSAS) show a composition bias toward low complexity. Residues 145–180 (EREQIKTLNNKFASFIDKVRFLEQQNKVLETKWSLL) are coil 1A. The IF rod domain occupies 145–458 (EREQIKTLNN…KLLEGEECRL (314 aa)). Residues 181–199 (QEQGTRTVRQSLEPFFEAY) form a linker 1 region. A coil 1B region spans residues 200–292 (ITDLRRQLDS…LFEAELCQMQ (93 aa)). The tract at residues 293 to 315 (TRVSDTSVVLSMDNNRSLDLDSI) is linker 12. Residues 316-454 (IAEVKAQYEE…ATYRKLLEGE (139 aa)) are coil 2. The interval 455 to 543 (ECRLSGEGVS…TSSSRKSYKH (89 aa)) is tail. Residues 511-543 (SSFSNSSSRGLGGSGSSFKFVSTTSSSRKSYKH) are disordered. Positions 526–543 (SSFKFVSTTSSSRKSYKH) are enriched in low complexity.

It belongs to the intermediate filament family. In terms of assembly, heterodimer of a type I and a type II keratin. May associate with KRT17.

Its function is as follows. Plays a central role in hair and nail formation. Essential component of keratin intermediate filaments in the companion layer of the hair follicle. The chain is Keratin, type II cytoskeletal 75 (KRT75) from Bos taurus (Bovine).